A 472-amino-acid chain; its full sequence is Aspartyl/glutamyl-tRNA(Asn/Gln) amidotransferase subunit B (472 aa).

It belongs to the GatB/GatE family. GatB subfamily. Heterotrimer of A, B and C subunits.

The catalysed reaction is L-glutamyl-tRNA(Gln) + L-glutamine + ATP + H2O = L-glutaminyl-tRNA(Gln) + L-glutamate + ADP + phosphate + H(+). The enzyme catalyses L-aspartyl-tRNA(Asn) + L-glutamine + ATP + H2O = L-asparaginyl-tRNA(Asn) + L-glutamate + ADP + phosphate + 2 H(+). Its function is as follows. Allows the formation of correctly charged Asn-tRNA(Asn) or Gln-tRNA(Gln) through the transamidation of misacylated Asp-tRNA(Asn) or Glu-tRNA(Gln) in organisms which lack either or both of asparaginyl-tRNA or glutaminyl-tRNA synthetases. The reaction takes place in the presence of glutamine and ATP through an activated phospho-Asp-tRNA(Asn) or phospho-Glu-tRNA(Gln). This Campylobacter jejuni (strain RM1221) protein is Aspartyl/glutamyl-tRNA(Asn/Gln) amidotransferase subunit B.